We begin with the raw amino-acid sequence, 207 residues long: Proteasome subunit beta 2 (207 aa).

Residues Met1–Gly13 constitute a propeptide, removed in mature form; by autocatalysis. Thr14 acts as the Nucleophile in catalysis.

This sequence belongs to the peptidase T1B family. As to quaternary structure, the 20S proteasome core is composed of 14 alpha and 14 beta subunits that assemble into four stacked heptameric rings, resulting in a barrel-shaped structure. The two inner rings, each composed of seven catalytic beta subunits, are sandwiched by two outer rings, each composed of seven alpha subunits. The catalytic chamber with the active sites is on the inside of the barrel. Has a gated structure, the ends of the cylinder being occluded by the N-termini of the alpha-subunits. Is capped at one or both ends by the proteasome regulatory ATPase, PAN.

The protein localises to the cytoplasm. It catalyses the reaction Cleavage of peptide bonds with very broad specificity.. The formation of the proteasomal ATPase PAN-20S proteasome complex, via the docking of the C-termini of PAN into the intersubunit pockets in the alpha-rings, triggers opening of the gate for substrate entry. Interconversion between the open-gate and close-gate conformations leads to a dynamic regulation of the 20S proteasome proteolysis activity. In terms of biological role, component of the proteasome core, a large protease complex with broad specificity involved in protein degradation. This is Proteasome subunit beta 2 from Sulfurisphaera tokodaii (strain DSM 16993 / JCM 10545 / NBRC 100140 / 7) (Sulfolobus tokodaii).